A 596-amino-acid polypeptide reads, in one-letter code: MRNIRNFSIIAHVDHGKSTLADRIIQLCGGLQAREMEAQVLDSNPIERERGITIKAQSVSLPYTAKDGQVYHLNFIDTPGHVDFSYEVSRSLAACEGALLVVDAAQGVEAQSVANCYTAVEQGLEVVPVLNKIDLPTADVDRAKAEIEAVIGIDAEDAVAVSAKTGLNIDLVLEAIVHRIPPPTPRDTDKLQALIIDSWFDNYLGVVSLVRVMQGEIKPGSKILVMSTGRTHLVDKVGVFTPKRKELSALGAGEVGWINASIKDVHGAPVGDTLTLAADPAPHALPGFQEMQPRVFAGLFPVDAEDYPDLREALDKLRLNDAALRFEPESSEAMGFGFRCGFLGMLHMEIVQERLEREYNLNLISTAPTVVYEVLKTDGSVIPMDNPSKLPPLNNVEEIREPIIRANILTPPDYVGNIITLCEEKRGSQIGINYLGSQVQISYELPMAEVVLDFFDKLKSVSRGYASLDYHFLRFDPGPFVRVDTLINGDKVDALSIIVHRSYADRRGRELCEKMKDLIPRQMFDVAIQAAVGSQIISRSTVKAMRKNVLAKCYGGDVSRKKKLLEKQKEGKKRMKQVGRVEIPQEAFLAVLQMDK.

Residues Arg2 to Thr184 form the tr-type G domain. Residues Asp14 to Thr19 and Asn131 to Asp134 contribute to the GTP site.

Belongs to the TRAFAC class translation factor GTPase superfamily. Classic translation factor GTPase family. LepA subfamily.

The protein localises to the cell inner membrane. It carries out the reaction GTP + H2O = GDP + phosphate + H(+). Its function is as follows. Required for accurate and efficient protein synthesis under certain stress conditions. May act as a fidelity factor of the translation reaction, by catalyzing a one-codon backward translocation of tRNAs on improperly translocated ribosomes. Back-translocation proceeds from a post-translocation (POST) complex to a pre-translocation (PRE) complex, thus giving elongation factor G a second chance to translocate the tRNAs correctly. Binds to ribosomes in a GTP-dependent manner. This Xanthomonas oryzae pv. oryzae (strain PXO99A) protein is Elongation factor 4.